Consider the following 412-residue polypeptide: rRNA methyltransferase 1, mitochondrial (412 aa).

A mitochondrion-targeting transit peptide spans 1-20 (MTSLTNAVFKRYLAVTPSAH).

It belongs to the class IV-like SAM-binding methyltransferase superfamily. RNA methyltransferase TrmH family.

The protein localises to the mitochondrion. The enzyme catalyses guanosine(2270) in 21S rRNA + S-adenosyl-L-methionine = 2'-O-methylguanosine(2270) in 21S rRNA + S-adenosyl-L-homocysteine + H(+). Its function is as follows. S-adenosyl-L-methionine-dependent 2'-O-ribose methyltransferase that catalyzes the formation of 2'-O-methylguanosine at position 2270 (Gm2270) in the 21S mitochondrial large subunit ribosomal RNA (mtLSU rRNA), a universally conserved modification in the peptidyl transferase domain of the mtLSU rRNA. This modification seems to be important for the normal accumulation of the mitochondrial large ribosomal subunit. The polypeptide is rRNA methyltransferase 1, mitochondrial (Saccharomyces cerevisiae (strain ATCC 204508 / S288c) (Baker's yeast)).